The sequence spans 182 residues: Probable chorismate pyruvate-lyase (182 aa).

Arginine 81, leucine 119, and glutamate 171 together coordinate substrate.

The protein belongs to the UbiC family.

The protein localises to the cytoplasm. It carries out the reaction chorismate = 4-hydroxybenzoate + pyruvate. The protein operates within cofactor biosynthesis; ubiquinone biosynthesis. Removes the pyruvyl group from chorismate, with concomitant aromatization of the ring, to provide 4-hydroxybenzoate (4HB) for the ubiquinone pathway. In Pseudomonas putida (Arthrobacter siderocapsulatus), this protein is Probable chorismate pyruvate-lyase.